The primary structure comprises 251 residues: Large ribosomal subunit protein uL3 (251 aa).

Residue Gln151 is modified to N5-methylglutamine. A disordered region spans residues 214 to 251 (KDAPFPAGLKSAANSNSAPTETPAEEVAAPEATEGQEG). Residues 231–251 (APTETPAEEVAAPEATEGQEG) are compositionally biased toward low complexity.

This sequence belongs to the universal ribosomal protein uL3 family. Part of the 50S ribosomal subunit. Forms a cluster with proteins L14 and L19. Post-translationally, methylated by PrmB.

One of the primary rRNA binding proteins, it binds directly near the 3'-end of the 23S rRNA, where it nucleates assembly of the 50S subunit. This chain is Large ribosomal subunit protein uL3, found in Rhizorhabdus wittichii (strain DSM 6014 / CCUG 31198 / JCM 15750 / NBRC 105917 / EY 4224 / RW1) (Sphingomonas wittichii).